The following is a 1119-amino-acid chain: Translation initiation factor IF-2 (1119 aa).

Disordered stretches follow at residues 64-463 (SIKK…TSGY) and 477-507 (RPKK…RQRQ). Residues 70–102 (IKKDNYKQNKEDKSSLISSVEEKPFKDNPEKKP) are compositionally biased toward basic and acidic residues. 2 stretches are compositionally biased toward polar residues: residues 116 to 153 (IISN…QNLN) and 182 to 212 (KNTT…KPDQ). Positions 213-224 (NSSKSKTKNINN) are enriched in low complexity. Polar residues-rich tracts occupy residues 242-257 (NKQN…QTVP), 281-297 (FNRQ…SSNK), 319-328 (FNRQVNTNRS), and 375-387 (QVIN…NSET). The span at 421–435 (GKTDWDDSAKLEALR) shows a compositional bias: basic and acidic residues. Over residues 493 to 507 (KQFKKKKKETTRQRQ) the composition is skewed to basic residues. One can recognise a tr-type G domain in the interval 610–782 (KRPPVITVMG…ILLVSEVEDL (173 aa)). A G1 region spans residues 619 to 626 (GHVDHGKT). 619 to 626 (GHVDHGKT) serves as a coordination point for GTP. A G2 region spans residues 644 to 648 (GITQH). Residues 669–672 (DTPG) form a G3 region. Residues 669 to 673 (DTPGH) and 723 to 726 (NKID) contribute to the GTP site. Residues 723–726 (NKID) form a G4 region. The G5 stretch occupies residues 759–761 (SAI).

Belongs to the TRAFAC class translation factor GTPase superfamily. Classic translation factor GTPase family. IF-2 subfamily.

The protein resides in the cytoplasm. In terms of biological role, one of the essential components for the initiation of protein synthesis. Protects formylmethionyl-tRNA from spontaneous hydrolysis and promotes its binding to the 30S ribosomal subunits. Also involved in the hydrolysis of GTP during the formation of the 70S ribosomal complex. This chain is Translation initiation factor IF-2, found in Prochlorococcus marinus (strain MIT 9215).